The primary structure comprises 534 residues: Monolignol oxidoreductase AtBBE-like 13 (534 aa).

The N-terminal stretch at 1–29 (MAFVLMNNTNAFLVTLLLLSLSYIPLSFS) is a signal peptide. 2 N-linked (GlcNAc...) asparagine glycosylation sites follow: asparagine 7 and asparagine 59. The cysteines at positions 38 and 102 are disulfide-linked. The segment at residues 117–181 (HDYEGLSYVS…KIHGFPAGLC (65 aa)) is a cross-link (6-(S-cysteinyl)-8alpha-(pros-histidyl)-FAD (His-Cys)).

This sequence belongs to the oxygen-dependent FAD-linked oxidoreductase family. The cofactor is FAD. In terms of processing, the FAD cofactor is bound via a bicovalent 6-S-cysteinyl, 8alpha-N1-histidyl FAD linkage.

It is found in the secreted. The protein localises to the cell wall. It carries out the reaction (E)-4-coumaroyl alcohol + A = (E)-4-coumaraldehyde + AH2. The enzyme catalyses (E)-coniferol + A = (E)-coniferaldehyde + AH2. It catalyses the reaction (E)-sinapyl alcohol + A = (E)-sinapaldehyde + AH2. It participates in phenylpropanoid metabolism. Mediates oxidation of p-hydroxylated derivatives of cinnamyl alcohol (i.e. the monolignols p-coumaryl-, coniferyl-, and sinapyl alcohol) to their corresponding aldehydes. The electron acceptor required for these reactions is not known, but does not seem to be dioxygen. Is much less efficient towards cinnamyl alcohol. This is Monolignol oxidoreductase AtBBE-like 13 from Arabidopsis thaliana (Mouse-ear cress).